The sequence spans 37 residues: Omega-conotoxin-like S6.7 (37 aa).

Residues 1–4 (KSTS) constitute a propeptide that is removed on maturation. Cystine bridges form between Cys-5–Cys-20, Cys-12–Cys-23, and Cys-19–Cys-32.

It belongs to the conotoxin O1 superfamily. Expressed by the venom duct.

The protein localises to the secreted. Functionally, omega-conotoxins act at presynaptic membranes, they bind and block voltage-gated calcium channels (Cav). This toxin blocks N-, P- and Q-type calcium channels. This chain is Omega-conotoxin-like S6.7, found in Conus striatus (Striated cone).